We begin with the raw amino-acid sequence, 318 residues long: Ankyrin repeat domain-containing protein 1 (318 aa).

Residues 37 to 77 (ALEKQEDLKTTSKSLIELEEEKQIKEKQLKSELLKKKLEER) are a coiled coil. ANK repeat units lie at residues 118-147 (VDQT…DPNT), 151-180 (YKRT…NIEF), 184-213 (LEST…AINA), 217-246 (LLST…DLHA), 250-279 (EGDT…DLNI), and 283-314 (AGKT…KNSH).

It is found in the nucleus. Functionally, may act as a nuclear transcription factor that negatively regulates the expression of cardiac genes. The protein is Ankyrin repeat domain-containing protein 1 (ankrd1) of Xenopus tropicalis (Western clawed frog).